Here is a 182-residue protein sequence, read N- to C-terminus: uncharacterized protein (182 aa).

Disordered regions lie at residues Met-1–Leu-73 and Ser-105–Arg-182. Composition is skewed to low complexity over residues Arg-43–Ser-68 and Ser-105–Thr-121. Over residues Ala-122 to Ser-131 the composition is skewed to pro residues.

This is an uncharacterized protein from Caenorhabditis elegans.